The chain runs to 859 residues: Active breakpoint cluster region-related protein (859 aa).

A disordered region spans residues Asp27–Glu84. The segment covering Pro54–Ser64 has biased composition (polar residues). Ser57 is subject to Phosphoserine. The DH domain occupies Met91 to Asp284. Residues Gln301–Lys459 form the PH domain. In terms of domain architecture, C2 spans Thr484–Ile613. The Rho-GAP domain occupies Val647–Phe845.

Interacts with DLG4.

It is found in the cell projection. Its subcellular location is the dendritic spine. The protein localises to the axon. It localises to the synapse. Functionally, protein with a unique structure having two opposing regulatory activities toward small GTP-binding proteins. The C-terminus is a GTPase-activating protein domain which stimulates GTP hydrolysis by RAC1, RAC2 and CDC42. Accelerates the intrinsic rate of GTP hydrolysis of RAC1 or CDC42, leading to down-regulation of the active GTP-bound form. The central Dbl homology (DH) domain functions as guanine nucleotide exchange factor (GEF) that modulates the GTPases CDC42, RHOA and RAC1. Promotes the conversion of CDC42, RHOA and RAC1 from the GDP-bound to the GTP-bound form. Functions as an important negative regulator of neuronal RAC1 activity. Regulates macrophage functions such as CSF1-directed motility and phagocytosis through the modulation of RAC1 activity. This Bos taurus (Bovine) protein is Active breakpoint cluster region-related protein (ABR).